A 464-amino-acid polypeptide reads, in one-letter code: Bifunctional protein GlmU (464 aa).

The pyrophosphorylase stretch occupies residues 1 to 231 (MDVVIMAAGK…ATQVAGVNSP (231 aa)). UDP-N-acetyl-alpha-D-glucosamine contacts are provided by residues lysine 20, glutamine 78, 83–84 (GT), 105–107 (SGD), glycine 142, glutamate 156, and asparagine 229. Mg(2+) is bound at residue aspartate 107. Residue asparagine 229 coordinates Mg(2+). The tract at residues 232-252 (VQLAALERAFQSKVALQLMEQ) is linker. The segment at 253-464 (GVRLADPARL…SIANWKRPSK (212 aa)) is N-acetyltransferase. UDP-N-acetyl-alpha-D-glucosamine is bound by residues arginine 343 and lysine 361. Residue histidine 373 is the Proton acceptor of the active site. UDP-N-acetyl-alpha-D-glucosamine-binding residues include tyrosine 376 and asparagine 387. Residues alanine 390, 396–397 (NY), serine 415, glycine 433, and arginine 450 each bind acetyl-CoA.

The protein in the N-terminal section; belongs to the N-acetylglucosamine-1-phosphate uridyltransferase family. This sequence in the C-terminal section; belongs to the transferase hexapeptide repeat family. In terms of assembly, homotrimer. Requires Mg(2+) as cofactor.

It localises to the cytoplasm. The enzyme catalyses alpha-D-glucosamine 1-phosphate + acetyl-CoA = N-acetyl-alpha-D-glucosamine 1-phosphate + CoA + H(+). It carries out the reaction N-acetyl-alpha-D-glucosamine 1-phosphate + UTP + H(+) = UDP-N-acetyl-alpha-D-glucosamine + diphosphate. It functions in the pathway nucleotide-sugar biosynthesis; UDP-N-acetyl-alpha-D-glucosamine biosynthesis; N-acetyl-alpha-D-glucosamine 1-phosphate from alpha-D-glucosamine 6-phosphate (route II): step 2/2. Its pathway is nucleotide-sugar biosynthesis; UDP-N-acetyl-alpha-D-glucosamine biosynthesis; UDP-N-acetyl-alpha-D-glucosamine from N-acetyl-alpha-D-glucosamine 1-phosphate: step 1/1. The protein operates within bacterial outer membrane biogenesis; LPS lipid A biosynthesis. Catalyzes the last two sequential reactions in the de novo biosynthetic pathway for UDP-N-acetylglucosamine (UDP-GlcNAc). The C-terminal domain catalyzes the transfer of acetyl group from acetyl coenzyme A to glucosamine-1-phosphate (GlcN-1-P) to produce N-acetylglucosamine-1-phosphate (GlcNAc-1-P), which is converted into UDP-GlcNAc by the transfer of uridine 5-monophosphate (from uridine 5-triphosphate), a reaction catalyzed by the N-terminal domain. In Albidiferax ferrireducens (strain ATCC BAA-621 / DSM 15236 / T118) (Rhodoferax ferrireducens), this protein is Bifunctional protein GlmU.